The sequence spans 643 residues: Pesticidal crystal protein Cry11Aa (643 aa).

The protein belongs to the delta endotoxin family.

Promotes colloidosmotic lysis by binding to the midgut epithelial cells of mosquitos. The protein is Pesticidal crystal protein Cry11Aa (cry11Aa) of Bacillus thuringiensis subsp. israelensis.